Reading from the N-terminus, the 320-residue chain is Malate dehydrogenase (320 aa).

NAD(+) contacts are provided by residues 10 to 15 (GSGMIG) and aspartate 34. Substrate-binding residues include arginine 83 and arginine 89. NAD(+)-binding positions include asparagine 96 and 119–121 (ITN). Substrate contacts are provided by asparagine 121 and arginine 152. Histidine 176 acts as the Proton acceptor in catalysis.

It belongs to the LDH/MDH superfamily. MDH type 3 family.

The catalysed reaction is (S)-malate + NAD(+) = oxaloacetate + NADH + H(+). Its function is as follows. Catalyzes the reversible oxidation of malate to oxaloacetate. This Rhizobium rhizogenes (strain K84 / ATCC BAA-868) (Agrobacterium radiobacter) protein is Malate dehydrogenase.